The chain runs to 1241 residues: MDNALCYLQHLKDERQFIFGILNDNVREINIAKKEIKQLREYVGILQQNGFTGEALVSQMEYSMKIKKIKKLSSQYDINSAENSSGPYDFSFIGNELTIFRERLSNYSSWGVMHSIPSMPESIYIYMNPIHQTDEVDIVYQGSNDNYSYLIKKNGRTASYEHQITLNLAKDAVKKHNLREATKQRIVNNRKVNFITKYTEVTTNGKTDQLAVPLFLLHLVKTATGYKVSYITIKIILEEQVESNVNIVEIDTGVEMTNAEVNAIITGLLSRMMMVTNFVLGNSMVHRRMLRQFIGMQVKVIEGAYVINSQKGAGSNLLSGMYGQGVIATLSSLATLLESTPQTVKPNYVLNGIHTNDIEQKEYEVSSILKYTTNKSKDRKVGLAERISNINKPYSVTMTLGKGNGGILAIREYSALKFNYDYPDQLDDIIPSNADSSRPDAVRMTMTKTQSNNDIKITTTVHIILDITDYKDKKVSEGVIHTTLRKSGIYVKLEAIHNQTRSEAPGSLGGTDSLVSTTLCGIAQVHSKTSALSELSNNGGVDFFDGDDVKRDNNMCTNRKNFCVKFTTTSRSSPSVTLDIKSLGKRYKGNFPMIIQRVVDLTGREAWAYEAQLSSITMDNVQLRFGSKQEISIKETSQQFVYDDNGIIKVKYEKTLSGSVLKDGSKITTVIPDQKFNSINDIDNILTSRNQRNLRHRDVPWTGANNATAKYNGFRDDGMWGRKESGLMQYNNEDDVIIPIAFLGYTTSGSGGSRYILREYDIERAQQLMHTITRRDRSNTRQGQKNIYVRDGTSSGGYVANWHAMKTSMYMSLPGKNIMIKNVEINDIQELVLPNGVYDQILLSATNITLWNSVLILNQYVVYIKELAEDNARRLDVVEKTLNKVIELHQTMTVTPEETAQEESGWDIAGRIFTMLGAVVGMFFPIIGASIEVLGLVATGVGSIQQGHIVNGSLELTLAGVATVIGGYKLQKRLRQKYTLEGIKDSIKIKMDKLKEKFGTRVKNTHIGKEDSNNGVSTSTNKRSIGKANNTLTGTTDIEIVNDVINGQSAHITKTTYSQISPELQDCYRELDALLELTGNVEHWPSGLNLATAFDIRLTEKIDKIGKGKMSINAIVHGEQRTAEVNDAVWSKCVGVKANVEDYTIIRSAYVDTVQKEEMINVDRDIIRDIYTANGTKIVEKTSVGINSNNVNGKEYTVTQDGDISQLEHVITSGTVNDQSMQLIIQRCVLYYSELSSSPSD.

Positions 21–49 (ILNDNVREINIAKKEIKQLREYVGILQQN) form a coiled coil. The next 3 membrane-spanning stretches (helical) occupy residues 261 to 281 (VNAIITGLLSRMMMVTNFVLG), 918 to 938 (AVVGMFFPIIGASIEVLGLVA), and 947 to 967 (GHIVNGSLELTLAGVATVIGG). Residues 1005–1028 (THIGKEDSNNGVSTSTNKRSIGKA) are disordered. Positions 1013 to 1028 (NNGVSTSTNKRSIGKA) are enriched in polar residues.

The protein resides in the host membrane. This is an uncharacterized protein from Diadromus pulchellus (Parasitic wasp).